Reading from the N-terminus, the 121-residue chain is Basic phospholipase A2 BmjeTX-I (121 aa).

Intrachain disulfides connect Cys26–Cys114, Cys28–Cys45, Cys44–Cys95, Cys50–Cys121, Cys51–Cys88, Cys58–Cys82, and Cys76–Cys86. The Ca(2+) site is built by Tyr27, Gly29, and Gly31. His48 is an active-site residue. Asp49 provides a ligand contact to Ca(2+). The active site involves Asp89.

It depends on Ca(2+) as a cofactor. In terms of tissue distribution, expressed by the venom gland.

The protein resides in the secreted. It catalyses the reaction a 1,2-diacyl-sn-glycero-3-phosphocholine + H2O = a 1-acyl-sn-glycero-3-phosphocholine + a fatty acid + H(+). Functionally, snake venom phospholipase A2 (PLA2) that induces a slight blockade of neuromuscular contraction in an indirectly stimulated chick biventer cervicis nerve-muscle preparation. Does not inhibit contraction of chick biventer cervicic nerve-muscle preparation in response to treatment with acetylcholine or KCl. The neuromuscular blockade is mediated by inhibitory action at the presynaptic motor nerve endings. Lyses skeletal myoblasts and myotubes in vitro, and intramuscular injection causes local muscle necrosis. Induces edema in the mouse foot pad. Induces a transient increase of IL-6 levels. PLA2 catalyzes the calcium-dependent hydrolysis of the 2-acyl groups in 3-sn-phosphoglycerides. In Bothrops marajoensis (Marajo lancehead), this protein is Basic phospholipase A2 BmjeTX-I.